Consider the following 218-residue polypeptide: Adenylate kinase (218 aa).

10–15 serves as a coordination point for ATP; it reads GAGKGT. Residues 30–59 form an NMP region; sequence STGDMLRAAIQAQTPLGLEAKKVMDDGKLV. AMP-binding positions include Thr31, Arg36, 57-59, 85-88, and Gln92; these read KLV and GFPR. The interval 122–159 is LID; sequence GRRVHLASGRTYHVIFNPPKKEGVDDITGEPLIQREDD. Residues Arg123 and 132 to 133 contribute to the ATP site; that span reads TY. Residues Arg156 and Arg167 each coordinate AMP. Position 203 (Gly203) interacts with ATP.

The protein belongs to the adenylate kinase family. In terms of assembly, monomer.

Its subcellular location is the cytoplasm. The catalysed reaction is AMP + ATP = 2 ADP. It functions in the pathway purine metabolism; AMP biosynthesis via salvage pathway; AMP from ADP: step 1/1. Functionally, catalyzes the reversible transfer of the terminal phosphate group between ATP and AMP. Plays an important role in cellular energy homeostasis and in adenine nucleotide metabolism. This chain is Adenylate kinase, found in Prosthecochloris aestuarii (strain DSM 271 / SK 413).